The following is a 267-amino-acid chain: 3-methyl-2-oxobutanoate hydroxymethyltransferase (267 aa).

Mg(2+) contacts are provided by Asp-45 and Asp-84. 3-methyl-2-oxobutanoate contacts are provided by residues 45-46, Asp-84, and Lys-113; that span reads DS. Glu-115 contributes to the Mg(2+) binding site. Glu-182 acts as the Proton acceptor in catalysis.

The protein belongs to the PanB family. In terms of assembly, homodecamer; pentamer of dimers. The cofactor is Mg(2+).

It localises to the cytoplasm. The catalysed reaction is 3-methyl-2-oxobutanoate + (6R)-5,10-methylene-5,6,7,8-tetrahydrofolate + H2O = 2-dehydropantoate + (6S)-5,6,7,8-tetrahydrofolate. It functions in the pathway cofactor biosynthesis; coenzyme A biosynthesis. Catalyzes the reversible reaction in which hydroxymethyl group from 5,10-methylenetetrahydrofolate is transferred onto alpha-ketoisovalerate to form ketopantoate. The sequence is that of 3-methyl-2-oxobutanoate hydroxymethyltransferase from Saccharolobus solfataricus (strain ATCC 35092 / DSM 1617 / JCM 11322 / P2) (Sulfolobus solfataricus).